The sequence spans 136 residues: MSATHHKTSLPQGVRVGTVMRIRGLVPDQAGRFHVNLLCGEEQGADAALHFNPRLDTSEVVFNTKQQGKWGREERGTGIPFQRGQPFEVLLIATEEGFKAVVGDDEYLHFHHRLPPARVRLVEVGGDVQLHSLNIF.

One can recognise a Galectin domain in the interval 6–136 (HKTSLPQGVR…DVQLHSLNIF (131 aa)). 70–76 (WGREERG) contributes to the a beta-D-galactoside binding site.

In terms of assembly, monomer.

It is found in the cytoplasm. Its subcellular location is the nucleus. The protein resides in the secreted. In terms of biological role, could be involved in cell-cell and/or cell-matrix interactions necessary for normal growth control. Pro-apoptotic protein that functions intracellularly upstream of JNK activation and cytochrome c release. This chain is Galectin-7 (Lgals7), found in Mus musculus (Mouse).